Consider the following 250-residue polypeptide: FAS1 domain-containing protein AER383W (250 aa).

A signal peptide spans 1 to 18; the sequence is MRLKTILLGFCAFHVARS. Positions 87-247 constitute an FAS1 domain; that stretch reads GVTLDDRLQS…GIVLVIDSSL (161 aa).

The protein localises to the vacuole. The sequence is that of FAS1 domain-containing protein AER383W from Eremothecium gossypii (strain ATCC 10895 / CBS 109.51 / FGSC 9923 / NRRL Y-1056) (Yeast).